The sequence spans 523 residues: Transcription initiation factor TFIID subunit 4 (523 aa).

Disordered stretches follow at residues 1-100 (MSLP…AASD) and 185-241 (ASVE…VQGG). Residues 58–77 (QMQPPRQPIQQQMQHFQSPS) show a composition bias toward low complexity. Residues 78–87 (PMAPQGPPGT) show a composition bias toward pro residues. The TAFH domain maps to 101–199 (DKNVTKCVRF…VNPPPGYVFN (99 aa)). The span at 204-213 (PGPPQPPPPQ) shows a compositional bias: pro residues. Residues 214–236 (QQSQQQPPLEMRQIPNPNQIPPQ) show a composition bias toward low complexity. The tract at residues 329–383 (LKPDEVLNRITKRMMSSCSVEEEALVAISDAVESHLRELITLMAGVAEHRVESLR) is histone-fold. Residues 333–382 (EVLNRITKRMMSSCSVEEEALVAISDAVESHLRELITLMAGVAEHRVESL) form a necessary and sufficient for interaction with oma-1 region. The interval 407 to 435 (QEEELRESREKESLIRMSKNKNSGKETIE) is disordered.

It belongs to the TAF4 family. Component of the TFIID basal transcription factor complex, composed of TATA-box-binding protein tbp-1, and a number of TBP-associated factors (TAFs). Interacts (via histone-fold domain) with oma-1 (via histone-fold domain). May also interact with oma-2. Interacts (via histone-fold domain) with taf-12 (via the histone-fold domain).

Its subcellular location is the nucleus. It localises to the cytoplasm. Functionally, the TFIID basal transcription factor complex plays a major role in the initiation of RNA polymerase II (Pol II)-dependent transcription. TFIID recognizes and binds promoters via its subunit tbp-1, a TATA-box-binding protein, and promotes assembly of the pre-initiation complex (PIC). The TFIID complex consists of tbp-1 and TBP-associated factors (TAFs), including taf-4. Essential for early embryonic development, probably acting via activating transcription initiation by RNA polymerase II, as part of the TFIID complex. In early embryos, but not oocytes, remains, presumably inactive, in the cytoplasm as a result of binding to oma-1. Upon degradation of oma-1, taf-4 is released and bound by taf-12, and the taf-4/12 heterodimer translocates to the nucleus and transcriptional repression is relieved. Involved in lifespan extension in a manner dependent upon mitochondrial function. Plays a role in modulating polyribosome formation. The protein is Transcription initiation factor TFIID subunit 4 of Caenorhabditis elegans.